Reading from the N-terminus, the 287-residue chain is Shikimate kinase (287 aa).

87-97 (PLASGLKSSSA) serves as a coordination point for ATP.

It belongs to the GHMP kinase family. Archaeal shikimate kinase subfamily.

It is found in the cytoplasm. It catalyses the reaction shikimate + ATP = 3-phosphoshikimate + ADP + H(+). It functions in the pathway metabolic intermediate biosynthesis; chorismate biosynthesis; chorismate from D-erythrose 4-phosphate and phosphoenolpyruvate: step 5/7. The chain is Shikimate kinase from Methanococcoides burtonii (strain DSM 6242 / NBRC 107633 / OCM 468 / ACE-M).